The sequence spans 442 residues: 26S proteasome regulatory subunit 6A (442 aa).

Ser12 is modified (phosphoserine). Residue 230–237 (GPPGTGKT) participates in ATP binding. Ser379 carries the post-translational modification Phosphoserine.

It belongs to the AAA ATPase family. In terms of assembly, component of the 19S proteasome regulatory particle complex. The 26S proteasome consists of a 20S core particle (CP) and two 19S regulatory subunits (RP). The regulatory particle is made of a lid composed of 9 subunits, a base containing 6 ATPases including PSMC3 and few additional components. Interacts with PAAF1.

Its subcellular location is the cytoplasm. It is found in the nucleus. In terms of biological role, component of the 26S proteasome, a multiprotein complex involved in the ATP-dependent degradation of ubiquitinated proteins. This complex plays a key role in the maintenance of protein homeostasis by removing misfolded or damaged proteins, which could impair cellular functions, and by removing proteins whose functions are no longer required. Therefore, the proteasome participates in numerous cellular processes, including cell cycle progression, apoptosis, or DNA damage repair. PSMC3 belongs to the heterohexameric ring of AAA (ATPases associated with diverse cellular activities) proteins that unfolds ubiquitinated target proteins that are concurrently translocated into a proteolytic chamber and degraded into peptides. The sequence is that of 26S proteasome regulatory subunit 6A (Psmc3) from Mus musculus (Mouse).